Here is a 198-residue protein sequence, read N- to C-terminus: Recombination protein RecR (198 aa).

Residues 57 to 72 (CSVCGHITEEDPCYIC) form a C4-type zinc finger. The Toprim domain occupies 80–175 (SVICVVEDDK…KVTRLAQGLS (96 aa)).

The protein belongs to the RecR family.

Functionally, may play a role in DNA repair. It seems to be involved in an RecBC-independent recombinational process of DNA repair. It may act with RecF and RecO. The sequence is that of Recombination protein RecR from Staphylococcus carnosus (strain TM300).